The chain runs to 281 residues: 4-diphosphocytidyl-2-C-methyl-D-erythritol kinase (281 aa).

K15 is a catalytic residue. An ATP-binding site is contributed by 98-108 (PTGAGLGGGSS). D140 is a catalytic residue.

The protein belongs to the GHMP kinase family. IspE subfamily.

It catalyses the reaction 4-CDP-2-C-methyl-D-erythritol + ATP = 4-CDP-2-C-methyl-D-erythritol 2-phosphate + ADP + H(+). Its pathway is isoprenoid biosynthesis; isopentenyl diphosphate biosynthesis via DXP pathway; isopentenyl diphosphate from 1-deoxy-D-xylulose 5-phosphate: step 3/6. Catalyzes the phosphorylation of the position 2 hydroxy group of 4-diphosphocytidyl-2C-methyl-D-erythritol. The chain is 4-diphosphocytidyl-2-C-methyl-D-erythritol kinase from Neisseria meningitidis serogroup B (strain ATCC BAA-335 / MC58).